Here is a 275-residue protein sequence, read N- to C-terminus: Anthracycline biosynthesis protein DauV (275 aa).

VOC domains lie at 8-136 (APAW…VWRK) and 150-263 (SVGW…VVEL).

The protein operates within antibiotic biosynthesis; daunorubicin biosynthesis. It functions in the pathway antibiotic biosynthesis; carminomycin biosynthesis. In terms of biological role, involved in the biosynthesis of the anthracyclines carminomycin and daunorubicin (daunomycin) which are aromatic polyketide antibiotics that exhibit high cytotoxicity and are widely applied in the chemotherapy of a variety of cancers. Acts jointly with DoxA in the conversion of 13-deoxycarminomycin and 13-deoxydaunorubicin to yield carminomycin and daunorubicin, respectively. This chain is Anthracycline biosynthesis protein DauV (dauV), found in Streptomyces sp. (strain C5).